The sequence spans 333 residues: Lipoyl synthase (333 aa).

Residues cysteine 55, cysteine 60, cysteine 66, cysteine 81, cysteine 85, cysteine 88, and serine 292 each coordinate [4Fe-4S] cluster. The region spanning 67–281 (WEDREATFLI…SAEAERLGFA (215 aa)) is the Radical SAM core domain.

It belongs to the radical SAM superfamily. Lipoyl synthase family. Requires [4Fe-4S] cluster as cofactor.

It localises to the cytoplasm. The enzyme catalyses [[Fe-S] cluster scaffold protein carrying a second [4Fe-4S](2+) cluster] + N(6)-octanoyl-L-lysyl-[protein] + 2 oxidized [2Fe-2S]-[ferredoxin] + 2 S-adenosyl-L-methionine + 4 H(+) = [[Fe-S] cluster scaffold protein] + N(6)-[(R)-dihydrolipoyl]-L-lysyl-[protein] + 4 Fe(3+) + 2 hydrogen sulfide + 2 5'-deoxyadenosine + 2 L-methionine + 2 reduced [2Fe-2S]-[ferredoxin]. The protein operates within protein modification; protein lipoylation via endogenous pathway; protein N(6)-(lipoyl)lysine from octanoyl-[acyl-carrier-protein]: step 2/2. Functionally, catalyzes the radical-mediated insertion of two sulfur atoms into the C-6 and C-8 positions of the octanoyl moiety bound to the lipoyl domains of lipoate-dependent enzymes, thereby converting the octanoylated domains into lipoylated derivatives. The protein is Lipoyl synthase of Kineococcus radiotolerans (strain ATCC BAA-149 / DSM 14245 / SRS30216).